Here is a 200-residue protein sequence, read N- to C-terminus: Holliday junction branch migration complex subunit RuvA (200 aa).

Residues 1–64 (MIGHLRGIIV…EDAHTLYGFH (64 aa)) form a domain I region. A domain II region spans residues 65–143 (NDHERRLFRA…RWHTNDTPSP (79 aa)). The interval 133-152 (SRWHTNDTPSPEGLRSSNTQ) is disordered. Residues 144-148 (EGLRS) are flexible linker. The tract at residues 149-200 (SNTQPTQDAISALMALGYKPQEAKRAIDAIQKPDLSAETLIRLALKQMVLGT) is domain III.

The protein belongs to the RuvA family. Homotetramer. Forms an RuvA(8)-RuvB(12)-Holliday junction (HJ) complex. HJ DNA is sandwiched between 2 RuvA tetramers; dsDNA enters through RuvA and exits via RuvB. An RuvB hexamer assembles on each DNA strand where it exits the tetramer. Each RuvB hexamer is contacted by two RuvA subunits (via domain III) on 2 adjacent RuvB subunits; this complex drives branch migration. In the full resolvosome a probable DNA-RuvA(4)-RuvB(12)-RuvC(2) complex forms which resolves the HJ.

The protein resides in the cytoplasm. The RuvA-RuvB-RuvC complex processes Holliday junction (HJ) DNA during genetic recombination and DNA repair, while the RuvA-RuvB complex plays an important role in the rescue of blocked DNA replication forks via replication fork reversal (RFR). RuvA specifically binds to HJ cruciform DNA, conferring on it an open structure. The RuvB hexamer acts as an ATP-dependent pump, pulling dsDNA into and through the RuvAB complex. HJ branch migration allows RuvC to scan DNA until it finds its consensus sequence, where it cleaves and resolves the cruciform DNA. This Coxiella burnetii (strain Dugway 5J108-111) protein is Holliday junction branch migration complex subunit RuvA.